The chain runs to 375 residues: L-asparaginase 2 (375 aa).

Residues 1 to 19 (MKKQRMLVLFTALLFVFTG) form the signal peptide. A disordered region spans residues 22-46 (HSPETKESPKEKAQTQKVSSASASE). Basic and acidic residues predominate over residues 24-35 (PETKESPKEKAQ). The Asparaginase/glutaminase domain occupies 51–375 (PNIRILATGG…QKIQAYFNEY (325 aa)). T61 (O-isoaspartyl threonine intermediate) is an active-site residue. Substrate-binding positions include S108 and 141 to 142 (TD).

The protein belongs to the asparaginase 1 family. Homotetramer.

It catalyses the reaction L-asparagine + H2O = L-aspartate + NH4(+). Functionally, catalyzes the conversion of L-asparagine to L-aspartate and ammonium. This is L-asparaginase 2 (ansZ) from Bacillus subtilis (strain 168).